A 111-amino-acid chain; its full sequence is Shuttling pre-60S factor C23B6.02c (111 aa).

Basic residues-rich tracts occupy residues Met-1–Phe-12 and Ser-59–Lys-73. 2 disordered regions span residues Met-1–Thr-25 and Ala-47–Glu-111. Positions Gln-83–Glu-111 are enriched in basic and acidic residues.

This sequence belongs to the ECM1 family. Associates with the pre-60S ribosomal particle and the nucleopore complex.

Its subcellular location is the nucleus. The protein resides in the nucleolus. It localises to the cytoplasm. Its function is as follows. Pre-ribosomal factor involved in 60S ribosomal protein subunit export from the nucleus. The chain is Shuttling pre-60S factor C23B6.02c from Schizosaccharomyces pombe (strain 972 / ATCC 24843) (Fission yeast).